We begin with the raw amino-acid sequence, 739 residues long: Copalyl diphosphate synthase 1 (739 aa).

Lysine 154 lines the substrate pocket. Mg(2+) is bound by residues aspartate 287 and aspartate 289. The DXDD motif signature appears at aspartate 287–aspartate 290. Lysine 373 is a binding site for substrate.

The protein belongs to the terpene synthase family. Mg(2+) serves as cofactor.

The enzyme catalyses (2E,6E,10E)-geranylgeranyl diphosphate = (+)-copalyl diphosphate. The protein operates within secondary metabolite biosynthesis; terpenoid biosynthesis. Monofunctional diterpene synthase converting geranylgeranyl diphosphate to copalyl diphosphate. The sequence is that of Copalyl diphosphate synthase 1 (CPS1) from Selaginella moellendorffii (Spikemoss).